A 509-amino-acid polypeptide reads, in one-letter code: Histidine ammonia-lyase (509 aa).

The segment at residues 142–144 (ASG) is a cross-link (5-imidazolinone (Ala-Gly)). Serine 143 is modified (2,3-didehydroalanine (Ser)).

This sequence belongs to the PAL/histidase family. Post-translationally, contains an active site 4-methylidene-imidazol-5-one (MIO), which is formed autocatalytically by cyclization and dehydration of residues Ala-Ser-Gly.

Its subcellular location is the cytoplasm. The enzyme catalyses L-histidine = trans-urocanate + NH4(+). It participates in amino-acid degradation; L-histidine degradation into L-glutamate; N-formimidoyl-L-glutamate from L-histidine: step 1/3. This is Histidine ammonia-lyase from Pseudomonas aeruginosa (strain LESB58).